Reading from the N-terminus, the 468-residue chain is Ammonium transporter Amt2 (468 aa).

Helical transmembrane passes span 1 to 21, 39 to 59, 77 to 97, 123 to 143, 156 to 176, 194 to 214, 236 to 256, 268 to 288, 297 to 317, 321 to 341, 350 to 370, and 400 to 420; these read MVGR…TAGA, FVWA…FAML, LMDF…LMMG, LWFF…GSIA, AVVS…GGWL, FAGS…AVML, LAFA…FNAG, IIAS…MAIT, VGMT…PCAW, WSSV…YWWL, VGAI…LGIF, and LISA…LFWI.

It belongs to the ammonia transporter channel (TC 1.A.11.2) family. In terms of assembly, homotrimer.

Its subcellular location is the cell membrane. Functionally, involved in the uptake of ammonium/ammonia (NH(4)(+)/NH(3)). Transport is electrogenic. The polypeptide is Ammonium transporter Amt2 (Archaeoglobus fulgidus (strain ATCC 49558 / DSM 4304 / JCM 9628 / NBRC 100126 / VC-16)).